The sequence spans 474 residues: Cyclin-dependent kinase 2 homolog (474 aa).

Residues 7-446 enclose the Protein kinase domain; it reads YRHVVKLGEG…AAEAVHHPYL (440 aa). ATP-binding positions include 13–21 and Lys-36; that span reads LGEGTYGMV. Thr-17 is modified (phosphothreonine). The residue at position 18 (Tyr-18) is a Phosphotyrosine. Asp-131 acts as the Proton acceptor in catalysis. Residues 150–200 are disordered; that stretch reads TALPSSPQQSMRVPHAGGTNGEAGRASANGNEHAPRPTAAEGSVSPWEEAA. Position 230 is a phosphoserine (Ser-230). A compositionally biased stretch (low complexity) spans 334-354; that stretch reads QQLQAQQQQPQQGSSPSHSSS. Residues 334–356 are disordered; it reads QQLQAQQQQPQQGSSPSHSSSRA.

Belongs to the protein kinase superfamily. CMGC Ser/Thr protein kinase family. CDC2/CDKX subfamily. As to quaternary structure, may form a complex composed of at least the catalytic subunit CRK2 and a cyclin. The cofactor is Mg(2+).

It is found in the cytoplasm. The catalysed reaction is L-seryl-[protein] + ATP = O-phospho-L-seryl-[protein] + ADP + H(+). It catalyses the reaction L-threonyl-[protein] + ATP = O-phospho-L-threonyl-[protein] + ADP + H(+). It carries out the reaction [DNA-directed RNA polymerase] + ATP = phospho-[DNA-directed RNA polymerase] + ADP + H(+). Its activity is regulated as follows. Phosphorylation at Thr-17 or Tyr-18 inactivates the enzyme, while phosphorylation at Ser-230 activates it. Its function is as follows. Serine/threonine-protein kinase. Involved in the control of the cell cycle. Required for entry into S-phase and mitosis. Probable component of the kinase complex that phosphorylates the repetitive C-terminus of RNA polymerase II. This chain is Cyclin-dependent kinase 2 homolog, found in Crithidia fasciculata.